The chain runs to 201 residues: Proteasome subunit beta 1 (201 aa).

A propeptide (removed in mature form; by autocatalysis) is located at residue Met1. Thr2 serves as the catalytic Nucleophile.

It belongs to the peptidase T1B family. As to quaternary structure, the 20S proteasome core is composed of 14 alpha and 14 beta subunits that assemble into four stacked heptameric rings, resulting in a barrel-shaped structure. The two inner rings, each composed of seven catalytic beta subunits, are sandwiched by two outer rings, each composed of seven alpha subunits. The catalytic chamber with the active sites is on the inside of the barrel. Has a gated structure, the ends of the cylinder being occluded by the N-termini of the alpha-subunits. Is capped at one or both ends by the proteasome regulatory ATPase, PAN.

The protein resides in the cytoplasm. The enzyme catalyses Cleavage of peptide bonds with very broad specificity.. Its activity is regulated as follows. The formation of the proteasomal ATPase PAN-20S proteasome complex, via the docking of the C-termini of PAN into the intersubunit pockets in the alpha-rings, triggers opening of the gate for substrate entry. Interconversion between the open-gate and close-gate conformations leads to a dynamic regulation of the 20S proteasome proteolysis activity. Its function is as follows. Component of the proteasome core, a large protease complex with broad specificity involved in protein degradation. This is Proteasome subunit beta 1 from Pyrobaculum neutrophilum (strain DSM 2338 / JCM 9278 / NBRC 100436 / V24Sta) (Thermoproteus neutrophilus).